The sequence spans 554 residues: Phosphomethylpyrimidine synthase (554 aa).

Residues Asn188, Met217, Tyr246, His282, 302-304 (SRG), 343-346 (DGLR), and Glu382 each bind substrate. A Zn(2+)-binding site is contributed by His386. Residue Tyr409 coordinates substrate. His450 contacts Zn(2+). Positions 530, 533, and 538 each coordinate [4Fe-4S] cluster.

The protein belongs to the ThiC family. Homodimer. [4Fe-4S] cluster serves as cofactor.

It catalyses the reaction 5-amino-1-(5-phospho-beta-D-ribosyl)imidazole + S-adenosyl-L-methionine = 4-amino-2-methyl-5-(phosphooxymethyl)pyrimidine + CO + 5'-deoxyadenosine + formate + L-methionine + 3 H(+). Its pathway is cofactor biosynthesis; thiamine diphosphate biosynthesis. In terms of biological role, catalyzes the synthesis of the hydroxymethylpyrimidine phosphate (HMP-P) moiety of thiamine from aminoimidazole ribotide (AIR) in a radical S-adenosyl-L-methionine (SAM)-dependent reaction. This chain is Phosphomethylpyrimidine synthase, found in Coxiella burnetii (strain CbuK_Q154) (Coxiella burnetii (strain Q154)).